A 419-amino-acid chain; its full sequence is Tyrosine--tRNA ligase (419 aa).

Tyrosine 42 lines the L-tyrosine pocket. A 'HIGH' region motif is present at residues 47–56 (ATAPSLHVGS). L-tyrosine is bound by residues tyrosine 179 and glutamine 183. A 'KMSKS' region motif is present at residues 239-243 (KMGKT). Lysine 242 lines the ATP pocket. Residues 353–418 (VVLAALFADA…GKKKIVLVKP (66 aa)) form the S4 RNA-binding domain.

This sequence belongs to the class-I aminoacyl-tRNA synthetase family. TyrS type 1 subfamily. Homodimer.

It is found in the cytoplasm. The catalysed reaction is tRNA(Tyr) + L-tyrosine + ATP = L-tyrosyl-tRNA(Tyr) + AMP + diphosphate + H(+). In terms of biological role, catalyzes the attachment of tyrosine to tRNA(Tyr) in a two-step reaction: tyrosine is first activated by ATP to form Tyr-AMP and then transferred to the acceptor end of tRNA(Tyr). The chain is Tyrosine--tRNA ligase from Caulobacter vibrioides (strain ATCC 19089 / CIP 103742 / CB 15) (Caulobacter crescentus).